The primary structure comprises 649 residues: MSEADASDAAPTGREIWIEKYRPATLENIYGQEDTVDRLQSYIDRDDLPHLLFAGPAGVGKCVTGSTPILTNKGIRQIGEIVGDVDGFAPAPQNLKVCSLTADGSFQYRHPSHVFGKRASGLQRIKTNDGATLTVTPEHKLLIRTGENTNPTWVPAADITAGMHVLRAKNLPIPAETTGSCAASKNASEVSHIGDEYRYHDSLMADVNTRIATLERLIEDYAESRSDGSLKFTLIGAHTPTVSTVSYLLATVGIASRHTSTLIDSEKRVHAIIIDASDTVRLEEMIETDWDTVMADQTTTVTSSSTASTTKTTQSYLSSGETQTCGWIPYADGGVTHPSTQHSPLHADVVTVSESLDAEKRVYDLTVPGVRNYVGGCIPTVMHNTTAATAIAHAVYGDDWQNNLLELNASDERGIDVVRDRIKNFARSSFGGYDHRIIFLDEADSLTDDAQSALRRTMEQFADNTRFILSCNYSSKIIDPIQSRCAVFRFSPLSETAIRGQTKDIAAAENIELTEDGLDALVYAAGGDMRRAINSLQAAATTGEVVDEETVYTITSTARPEDIETMVTAAIDGDFTTARSQLQTLLVDTGMAGGDIIDQLHRTAWNLDLDEETTVRLLERVGEADYRITVGANEQVQLEALLASLADTQ.

Residue glycine 55 to threonine 385 coordinates ATP.

It belongs to the activator 1 small subunits family. RfcS subfamily. In terms of assembly, heteromultimer composed of small subunits (RfcS) and large subunits (RfcL). In terms of processing, this protein undergoes a protein self splicing that involves a post-translational excision of the intervening region (intein) followed by peptide ligation.

Its function is as follows. Part of the RFC clamp loader complex which loads the PCNA sliding clamp onto DNA. The sequence is that of Replication factor C small subunit (rfcS) from Haloquadratum walsbyi (strain DSM 16790 / HBSQ001).